A 146-amino-acid chain; its full sequence is Arginine vasopressin-induced protein 1 (146 aa).

Disordered stretches follow at residues 1–31 (MGTP…RKQA) and 80–146 (RRKR…QIRH). A compositionally biased stretch (basic residues) spans 80–92 (RRKRPPRQNHCSR). Positions 106 to 123 (QASTTDTASSEQFGNSRR) are enriched in polar residues.

Its function is as follows. May be involved in MAP kinase activation, epithelial sodium channel (ENaC) down-regulation and cell cycling. The polypeptide is Arginine vasopressin-induced protein 1 (Avpi1) (Rattus norvegicus (Rat)).